Here is a 312-residue protein sequence, read N- to C-terminus: HPr kinase/phosphorylase (312 aa).

Catalysis depends on residues His-139 and Lys-160. 154-161 (GDSGIGKS) serves as a coordination point for ATP. Ser-161 is a binding site for Mg(2+). Asp-178 serves as the catalytic Proton acceptor; for phosphorylation activity. Proton donor; for dephosphorylation activity. The tract at residues 202 to 211 (IEIRGVGIID) is important for the catalytic mechanism of both phosphorylation and dephosphorylation. A Mg(2+)-binding site is contributed by Glu-203. Arg-244 is a catalytic residue. The segment at 265–270 (PVKTGR) is important for the catalytic mechanism of dephosphorylation.

It belongs to the HPrK/P family. In terms of assembly, homohexamer. The cofactor is Mg(2+).

The enzyme catalyses [HPr protein]-L-serine + ATP = [HPr protein]-O-phospho-L-serine + ADP + H(+). It carries out the reaction [HPr protein]-O-phospho-L-serine + phosphate + H(+) = [HPr protein]-L-serine + diphosphate. Functionally, catalyzes the ATP- as well as the pyrophosphate-dependent phosphorylation of a specific serine residue in HPr, a phosphocarrier protein of the phosphoenolpyruvate-dependent sugar phosphotransferase system (PTS). HprK/P also catalyzes the pyrophosphate-producing, inorganic phosphate-dependent dephosphorylation (phosphorolysis) of seryl-phosphorylated HPr (P-Ser-HPr). The two antagonistic activities of HprK/P are regulated by several intracellular metabolites, which change their concentration in response to the absence or presence of rapidly metabolisable carbon sources (glucose, fructose, etc.) in the growth medium. Therefore, by controlling the phosphorylation state of HPr, HPrK/P is a sensor enzyme that plays a major role in the regulation of carbon metabolism and sugar transport: it mediates carbon catabolite repression (CCR), and regulates PTS-catalyzed carbohydrate uptake and inducer exclusion. This chain is HPr kinase/phosphorylase, found in Streptococcus pneumoniae (strain ATCC BAA-255 / R6).